A 288-amino-acid polypeptide reads, in one-letter code: UPF0761 membrane protein HSM_1104 (288 aa).

A run of 6 helical transmembrane segments spans residues 36 to 56 (TLALVPLIMVFFSVFAAFPVF), 92 to 112 (QMSAVGIISLIVVALMLIHSI), 127 to 147 (PAIFSFAIYWLILTLGPIVIA), 176 to 196 (LLSLMPFFLTWFIFTVLYMVV), 200 to 220 (KVSIIHSAAGALIAAVFFTLG), and 240 to 260 (AMATLPIMLLWIQLSWTAVLL).

The protein belongs to the UPF0761 family.

It localises to the cell inner membrane. The sequence is that of UPF0761 membrane protein HSM_1104 from Histophilus somni (strain 2336) (Haemophilus somnus).